The sequence spans 509 residues: FAD-linked oxidoreductase anuG (509 aa).

The first 21 residues, 1 to 21 (MVQISNVWGFGLAIMASLAAA), serve as a signal peptide directing secretion. An FAD-binding PCMH-type domain is found at 75 to 246 (YAAPKFTVVV…TSFEMSIYPT (172 aa)).

This sequence belongs to the oxygen-dependent FAD-linked oxidoreductase family. Requires FAD as cofactor.

The catalysed reaction is (2S,9S)-annullatin H + 2 A = (2S,9S)-annullatin D + 2 AH2. Its pathway is secondary metabolite biosynthesis. In terms of biological role, cytochrome P450 monooxygenase; part of the gene cluster that mediates the biosynthesis of annullatin D, an alkylated aromatic polyketide with a fused dihydrobenzofuran lactone ring system that exhibits potent agonistic activities toward the cannabinoid receptors. Within the pathway, anuG is responsible for the five-member lactone ring formation in (2S, 9S)-annullatin D via oxidative lactonization between the two hydroxyl groups. The annullatin backbone 2-hydroxymethyl-3-pentylphenol is assembled from one acetyl-CoA starter unit and 5 malonyl-CoA elongation units by cooperation of the highly reducing polyketide synthase anuA, the short-chain dehydrogenase anuB and the oxidoreductase anuC, before being hydroxylated at the C-5 alkyl chain by the cytochrome P450 monooxygenase anuE to form (8S)-annullatin E. The prenyltransferase anuH subsequently installs one isoprenyl group at the benzene ring to form (8S)-annullatin J. Enzymatic or nonenzymatic dihydro-benzofuran ring formation between the prenyl and the phenolic hydroxyl groups in (8S)-annullatin J results in two diastereomers (2S,9S)-annullatin H and compound 12. The intermediate (2S,9S)-annullatin H is then converted to (2S,9S)-annullatin D by the FAD-linked oxidoreductase anuG-catalyzed five-member lactone ring formation. The isomer 12 acts as a substrate for the short-chain dehydrogenase anuF and is oxidized to (2R)-annullatin F, which is subsequently acetylated by an acetyltransferase leading to (2R)-annullatin G formation. The remaining enzymes identified within the cluster, anuD, anuI and anuJ, seem not to be involved in annullatin biosynthesis. The chain is FAD-linked oxidoreductase anuG from Penicillium roqueforti (strain FM164).